The chain runs to 271 residues: 4-hydroxy-tetrahydrodipicolinate reductase (271 aa).

NAD(+)-binding positions include 10-15 (GAGGRM), Glu36, 100-102 (GTT), and 124-127 (SGNM). His157 serves as the catalytic Proton donor/acceptor. His158 contributes to the (S)-2,3,4,5-tetrahydrodipicolinate binding site. Lys161 acts as the Proton donor in catalysis. 167-168 (GT) lines the (S)-2,3,4,5-tetrahydrodipicolinate pocket.

It belongs to the DapB family.

Its subcellular location is the cytoplasm. The catalysed reaction is (S)-2,3,4,5-tetrahydrodipicolinate + NAD(+) + H2O = (2S,4S)-4-hydroxy-2,3,4,5-tetrahydrodipicolinate + NADH + H(+). It carries out the reaction (S)-2,3,4,5-tetrahydrodipicolinate + NADP(+) + H2O = (2S,4S)-4-hydroxy-2,3,4,5-tetrahydrodipicolinate + NADPH + H(+). Its pathway is amino-acid biosynthesis; L-lysine biosynthesis via DAP pathway; (S)-tetrahydrodipicolinate from L-aspartate: step 4/4. In terms of biological role, catalyzes the conversion of 4-hydroxy-tetrahydrodipicolinate (HTPA) to tetrahydrodipicolinate. The chain is 4-hydroxy-tetrahydrodipicolinate reductase from Rhodopseudomonas palustris (strain BisB18).